The sequence spans 97 residues: Co-chaperonin GroES (97 aa).

The protein belongs to the GroES chaperonin family. In terms of assembly, heptamer of 7 subunits arranged in a ring. Interacts with the chaperonin GroEL.

The protein localises to the cytoplasm. Its function is as follows. Together with the chaperonin GroEL, plays an essential role in assisting protein folding. The GroEL-GroES system forms a nano-cage that allows encapsulation of the non-native substrate proteins and provides a physical environment optimized to promote and accelerate protein folding. GroES binds to the apical surface of the GroEL ring, thereby capping the opening of the GroEL channel. The chain is Co-chaperonin GroES from Aeromonas hydrophila subsp. hydrophila (strain ATCC 7966 / DSM 30187 / BCRC 13018 / CCUG 14551 / JCM 1027 / KCTC 2358 / NCIMB 9240 / NCTC 8049).